The chain runs to 476 residues: Ribulose bisphosphate carboxylase large chain (476 aa).

Residues 1-2 (MS) constitute a propeptide that is removed on maturation. Pro3 carries the post-translational modification N-acetylproline. Residue Lys14 is modified to N6,N6,N6-trimethyllysine. Substrate-binding residues include Asn123 and Thr173. The active-site Proton acceptor is Lys175. Residue Lys177 coordinates substrate. Residues Lys201, Asp203, and Glu204 each contribute to the Mg(2+) site. At Lys201 the chain carries N6-carboxylysine. Catalysis depends on His294, which acts as the Proton acceptor. The substrate site is built by Arg295, His327, and Ser379.

Belongs to the RuBisCO large chain family. Type I subfamily. Heterohexadecamer of 8 large chains and 8 small chains; disulfide-linked. The disulfide link is formed within the large subunit homodimers. Mg(2+) is required as a cofactor. The disulfide bond which can form in the large chain dimeric partners within the hexadecamer appears to be associated with oxidative stress and protein turnover.

It localises to the plastid. Its subcellular location is the chloroplast. The enzyme catalyses 2 (2R)-3-phosphoglycerate + 2 H(+) = D-ribulose 1,5-bisphosphate + CO2 + H2O. The catalysed reaction is D-ribulose 1,5-bisphosphate + O2 = 2-phosphoglycolate + (2R)-3-phosphoglycerate + 2 H(+). In terms of biological role, ruBisCO catalyzes two reactions: the carboxylation of D-ribulose 1,5-bisphosphate, the primary event in carbon dioxide fixation, as well as the oxidative fragmentation of the pentose substrate in the photorespiration process. Both reactions occur simultaneously and in competition at the same active site. This Sorghum bicolor (Sorghum) protein is Ribulose bisphosphate carboxylase large chain.